The following is a 427-amino-acid chain: Glutamate-1-semialdehyde 2,1-aminomutase (427 aa).

An N6-(pyridoxal phosphate)lysine modification is found at lysine 264.

The protein belongs to the class-III pyridoxal-phosphate-dependent aminotransferase family. HemL subfamily. As to quaternary structure, homodimer. Pyridoxal 5'-phosphate is required as a cofactor.

It localises to the cytoplasm. The enzyme catalyses (S)-4-amino-5-oxopentanoate = 5-aminolevulinate. It functions in the pathway porphyrin-containing compound metabolism; protoporphyrin-IX biosynthesis; 5-aminolevulinate from L-glutamyl-tRNA(Glu): step 2/2. The protein is Glutamate-1-semialdehyde 2,1-aminomutase of Campylobacter concisus (strain 13826).